The following is a 259-amino-acid chain: Exosome complex component Rrp42 (259 aa).

This sequence belongs to the RNase PH family. Rrp42 subfamily. As to quaternary structure, component of the archaeal exosome complex. Forms a hexameric ring-like arrangement composed of 3 Rrp41-Rrp42 heterodimers. The hexameric ring associates with a trimer of Rrp4 and/or Csl4 subunits.

It is found in the cytoplasm. Its function is as follows. Non-catalytic component of the exosome, which is a complex involved in RNA degradation. Contributes to the structuring of the Rrp41 active site. This chain is Exosome complex component Rrp42, found in Archaeoglobus fulgidus (strain ATCC 49558 / DSM 4304 / JCM 9628 / NBRC 100126 / VC-16).